Consider the following 351-residue polypeptide: Histidinol-phosphate aminotransferase 1 (351 aa).

N6-(pyridoxal phosphate)lysine is present on lysine 210.

Belongs to the class-II pyridoxal-phosphate-dependent aminotransferase family. Histidinol-phosphate aminotransferase subfamily. As to quaternary structure, homodimer. Pyridoxal 5'-phosphate is required as a cofactor.

It catalyses the reaction L-histidinol phosphate + 2-oxoglutarate = 3-(imidazol-4-yl)-2-oxopropyl phosphate + L-glutamate. It functions in the pathway amino-acid biosynthesis; L-histidine biosynthesis; L-histidine from 5-phospho-alpha-D-ribose 1-diphosphate: step 7/9. This is Histidinol-phosphate aminotransferase 1 (hisC1) from Pasteurella multocida (strain Pm70).